The sequence spans 227 residues: MADNELFDDPEKLKRGLVKVLECVATISSAAAVVNPIFGVAGSLIRVVLHHVDDEDLQKLKREFGSVNRALDEISQQNRQALLQIRKETVDRQYHEVEENIRHQFRKFMEIMEAKPEHLQRKKEDFVESFINDKDDQNMYTLYDGVMGKRKLFSQPILDVYMKHSQGDHRVMENLCTRLAYLFCIGFIALMGYYGILGDDLESRNEEWEENMRNVQEKMQEVLRSCK.

A helical membrane pass occupies residues 179–196 (LAYLFCIGFIALMGYYGI).

It is found in the membrane. The polypeptide is Protein rapunzel (Danio rerio (Zebrafish)).